Consider the following 118-residue polypeptide: Large ribosomal subunit protein bL20 (118 aa).

Belongs to the bacterial ribosomal protein bL20 family.

Functionally, binds directly to 23S ribosomal RNA and is necessary for the in vitro assembly process of the 50S ribosomal subunit. It is not involved in the protein synthesizing functions of that subunit. This Klebsiella pneumoniae (strain 342) protein is Large ribosomal subunit protein bL20.